Here is a 122-residue protein sequence, read N- to C-terminus: MIQMQTNLEVADNSGARRVMCIKVLGGAGRRYASVGDVIVVSVKEAIPRGRVKKGDVLRAVVVRVNQGMKRKDGSLIRFDKNAAVIVNKQSEPVGTRIFGPVPRELRAKNHMKIISLAPEVL.

Belongs to the universal ribosomal protein uL14 family. As to quaternary structure, part of the 50S ribosomal subunit. Forms a cluster with proteins L3 and L19. In the 70S ribosome, L14 and L19 interact and together make contacts with the 16S rRNA in bridges B5 and B8.

Its function is as follows. Binds to 23S rRNA. Forms part of two intersubunit bridges in the 70S ribosome. The sequence is that of Large ribosomal subunit protein uL14 from Caulobacter sp. (strain K31).